The following is a 524-amino-acid chain: Bifunctional purine biosynthesis protein PurH (524 aa).

Residues 1–144 form the MGS-like domain; sequence MTRRALVSVS…KNSAHVGVVV (144 aa).

This sequence belongs to the PurH family.

It carries out the reaction (6R)-10-formyltetrahydrofolate + 5-amino-1-(5-phospho-beta-D-ribosyl)imidazole-4-carboxamide = 5-formamido-1-(5-phospho-D-ribosyl)imidazole-4-carboxamide + (6S)-5,6,7,8-tetrahydrofolate. It catalyses the reaction IMP + H2O = 5-formamido-1-(5-phospho-D-ribosyl)imidazole-4-carboxamide. The protein operates within purine metabolism; IMP biosynthesis via de novo pathway; 5-formamido-1-(5-phospho-D-ribosyl)imidazole-4-carboxamide from 5-amino-1-(5-phospho-D-ribosyl)imidazole-4-carboxamide (10-formyl THF route): step 1/1. It functions in the pathway purine metabolism; IMP biosynthesis via de novo pathway; IMP from 5-formamido-1-(5-phospho-D-ribosyl)imidazole-4-carboxamide: step 1/1. The protein is Bifunctional purine biosynthesis protein PurH of Anaeromyxobacter dehalogenans (strain 2CP-1 / ATCC BAA-258).